The sequence spans 949 residues: Coiled-coil domain-containing protein 80 (949 aa).

The N-terminal stretch at 1–22 (MMWKMGPHFTTLLAMWLVCGSA) is a signal peptide. Disordered regions lie at residues 24-79 (HSPA…RRKS), 112-132 (SSAR…MLRF), and 289-610 (HVVQ…PKKS). A compositionally biased stretch (basic and acidic residues) spans 112–123 (SSAREMVRDEGS). Positions 295–307 (NEGGGGAGGTGLG) are enriched in gly residues. Basic and acidic residues predominate over residues 308–328 (GDKRKEDPRRTQVHPTREAPR). Over residues 345–380 (RATTLPPAPVTTATRATSRVVTIAARPTTTTAYPAT) the composition is skewed to low complexity. Residues 419 to 429 (PRKEQQREKPQ) show a composition bias toward basic and acidic residues. Residues 436–445 (KATNYGSFTA) show a composition bias toward polar residues. Residues 463–477 (RFRDNRTDKREHGHQ) are compositionally biased toward basic and acidic residues. N-linked (GlcNAc...) asparagine glycosylation occurs at asparagine 467. Basic residues predominate over residues 487–498 (KPVKGKLPKKKD). 3 stretches are compositionally biased toward basic and acidic residues: residues 499–510 (RILSNEYEDKYD), 534–548 (KESK…PEKE), and 556–581 (AKQD…EKDK). Residues lysine 544 and lysine 547 each participate in a glycyl lysine isopeptide (Lys-Gly) (interchain with G-Cter in SUMO2) cross-link. Residues 554–587 (KSAKQDKLLKSEKQAKKAEKKTKQEKDKNKKKKA) adopt a coiled-coil conformation.

It belongs to the CCDC80 family. As to quaternary structure, binds to various extracellular matrix proteins. Phosphorylated. As to expression, expressed in brain, stomach, colon, rectum, liver, lung, kidney, adipocytes and testis.

It is found in the secreted. The protein resides in the extracellular space. Its subcellular location is the extracellular matrix. Functionally, promotes cell adhesion and matrix assembly. The polypeptide is Coiled-coil domain-containing protein 80 (Ccdc80) (Mus musculus (Mouse)).